Here is a 389-residue protein sequence, read N- to C-terminus: Sterol methyltransferase-like 1 (389 aa).

The helical transmembrane segment at 25–45 (IAAGVTAAVVIGGYIWIITEL) threads the bilayer.

Belongs to the class I-like SAM-binding methyltransferase superfamily. Erg6/SMT family.

It localises to the microsome membrane. Functionally, unable to convert squalene, botryococcene, cycloartenol, zymosterol or lanosterol to mono-, di-, tri- or tetramethylated derivatives. The protein is Sterol methyltransferase-like 1 (SMT-1) of Botryococcus braunii (Green alga).